Reading from the N-terminus, the 250-residue chain is Manganese transport system ATP-binding protein MntB (250 aa).

The region spanning 5 to 236 is the ABC transporter domain; that stretch reads VKVDNLSVFY…MVAKTYQGNL (232 aa). 37–44 serves as a coordination point for ATP; sequence GPNGAGKS.

The protein belongs to the ABC transporter superfamily.

It localises to the cell membrane. This protein is probably a component of a manganese permease, a binding protein-dependent, ATP-driven transport system. Probably responsible for energy coupling to the transport system. The protein is Manganese transport system ATP-binding protein MntB (mntB) of Halalkalibacterium halodurans (strain ATCC BAA-125 / DSM 18197 / FERM 7344 / JCM 9153 / C-125) (Bacillus halodurans).